The chain runs to 71 residues: Protein translocase subunit SecE (71 aa).

Residues 43-63 (VAGAGILAVGAVGFIIYVLLT) form a helical membrane-spanning segment.

The protein belongs to the SecE/SEC61-gamma family. As to quaternary structure, component of the Sec protein translocase complex. Heterotrimer consisting of SecY (alpha), SecG (beta) and SecE (gamma) subunits. The heterotrimers can form oligomers, although 1 heterotrimer is thought to be able to translocate proteins. Interacts with the ribosome. May interact with SecDF, and other proteins may be involved.

The protein localises to the cell membrane. Functionally, essential subunit of the Sec protein translocation channel SecYEG. Clamps together the 2 halves of SecY. May contact the channel plug during translocation. In Methanosarcina mazei (strain ATCC BAA-159 / DSM 3647 / Goe1 / Go1 / JCM 11833 / OCM 88) (Methanosarcina frisia), this protein is Protein translocase subunit SecE.